Consider the following 886-residue polypeptide: Valine--tRNA ligase (886 aa).

Residues 53-63 carry the 'HIGH' region motif; that stretch reads PNVTGSLHMGH. The 'KMSKS' region motif lies at 540–544; it reads KMSKS. K543 contributes to the ATP binding site. Residues 820-851 are a coiled coil; it reads IDVAAERRRMEKDLAAAQKELASTAAKLANAD.

The protein belongs to the class-I aminoacyl-tRNA synthetase family. ValS type 1 subfamily. As to quaternary structure, monomer.

The protein localises to the cytoplasm. The catalysed reaction is tRNA(Val) + L-valine + ATP = L-valyl-tRNA(Val) + AMP + diphosphate. Functionally, catalyzes the attachment of valine to tRNA(Val). As ValRS can inadvertently accommodate and process structurally similar amino acids such as threonine, to avoid such errors, it has a 'posttransfer' editing activity that hydrolyzes mischarged Thr-tRNA(Val) in a tRNA-dependent manner. This is Valine--tRNA ligase from Mycobacterium leprae (strain TN).